The chain runs to 490 residues: MNLAEICDNAKKGREYALLGNYDSSMVYYQGVIQQIQRHCQSIRDPAVKGKWQQVRQELLEEYEQVKSIVSTLESFKIEKPPDFPVSCQDEPFRDPAVWPPPVPAEHRAPPQIRRPNREVRPLRKEMAGVGARGPVGRAHPISKSEKPSASRDKDCRARGRDDKGRKNMQDGASDGEIPKFDGAGYDKDLVEALERDIVSRNPSIHWDDIADLEEAKKLLREAVVLPMWMPDFFKGIRRPWKGVLMVGPPGTGKTMLAKAVATECGTTFFNVSSSTLTSKYRGESEKLVRLLFEMARFYAPTTIFIDEIDSICSRRGTSDEHEASRRVKSELLVQMDGVGGALENDDPSKMVMVLAATNFPWDIDEALRRRLEKRIYIPLPTAKGRAELLKISLREVELDPDIRLEDIAEKIEGYSGADITNVCRDASLMAMRRRINGLSPEEIRALSKEELQMPVTRGDFELALKKIAKSVSAADLEKYEKWMVEFGSA.

M1 is modified (N-acetylmethionine). The tract at residues 96–182 (PAVWPPPVPA…ASDGEIPKFD (87 aa)) is disordered. Positions 116-127 (PNREVRPLRKEM) are enriched in basic and acidic residues. The segment covering 128–139 (AGVGARGPVGRA) has biased composition (low complexity). Positions 143–169 (SKSEKPSASRDKDCRARGRDDKGRKNM) are enriched in basic and acidic residues. S174 is subject to Phosphoserine. 248 to 255 (GPPGTGKT) contacts ATP.

The protein belongs to the AAA ATPase family. Katanin p60 subunit A1 subfamily. A-like 1 sub-subfamily. As to quaternary structure, interacts with KATNB1 and KATNBL1.

It localises to the cytoplasm. The protein localises to the cytoskeleton. The protein resides in the spindle pole. It is found in the spindle. It catalyses the reaction n ATP + n H2O + a microtubule = n ADP + n phosphate + (n+1) alpha/beta tubulin heterodimers.. In terms of biological role, regulates microtubule dynamics in Sertoli cells, a process that is essential for spermiogenesis and male fertility. Severs microtubules in an ATP-dependent manner, promoting rapid reorganization of cellular microtubule arrays. Has microtubule-severing activity in vitro. The sequence is that of Katanin p60 ATPase-containing subunit A-like 1 from Oryctolagus cuniculus (Rabbit).